The following is a 418-amino-acid chain: Delta(14)-sterol reductase TM7SF2 (418 aa).

6 helical membrane-spanning segments follow: residues 13–35 (FGGP…HLLL), 62–81 (ALLL…LLPA), 102–124 (GFQA…LPLS), 129–148 (MLLP…SLLL), 255–277 (FGFM…QAQF), and 287–304 (WPLA…YYIF). Residues K311, R315, L338, W343, and 350 to 351 (NY) each bind NADP(+). A helical membrane pass occupies residues 355 to 377 (LIMALAWSLPCGVFHLLPYFYFL). Residues D390, 394–398 (CRQKY), and Y405 each bind NADP(+).

It belongs to the ERG4/ERG24 family. Highly expressed in liver and brain.

It is found in the microsome membrane. It localises to the endoplasmic reticulum membrane. The enzyme catalyses 4,4-dimethyl-5alpha-cholesta-8,24-dien-3beta-ol + NADP(+) = 4,4-dimethyl-5alpha-cholesta-8,14,24-trien-3beta-ol + NADPH + H(+). It carries out the reaction 5alpha-cholest-8,14-dien-3beta-ol + NADPH + H(+) = 5alpha-cholest-8-en-3beta-ol + NADP(+). It catalyses the reaction 4,4-dimethyl-8,14-cholestadien-3beta-ol + NADPH + H(+) = 4,4-dimethyl-5alpha-cholest-8-en-3beta-ol + NADP(+). It functions in the pathway steroid biosynthesis; cholesterol biosynthesis. In terms of biological role, catalyzes the reduction of the C14-unsaturated bond of lanosterol, as part of the metabolic pathway leading to cholesterol biosynthesis. The polypeptide is Delta(14)-sterol reductase TM7SF2 (TM7SF2) (Bos taurus (Bovine)).